The chain runs to 72 residues: Small ribosomal subunit protein eS31 (72 aa).

The Zn(2+) site is built by cysteine 32, cysteine 35, cysteine 51, and cysteine 54. The C4-type zinc finger occupies 32–54 (CPRCGSVMAYHKEPVPRWHCGKC).

This sequence belongs to the eukaryotic ribosomal protein eS31 family. As to quaternary structure, part of the 30S ribosomal subunit. The cofactor is Zn(2+).

This chain is Small ribosomal subunit protein eS31, found in Caldivirga maquilingensis (strain ATCC 700844 / DSM 13496 / JCM 10307 / IC-167).